Consider the following 414-residue polypeptide: Serine hydroxymethyltransferase (414 aa).

(6S)-5,6,7,8-tetrahydrofolate contacts are provided by residues Leu-116 and 120–122 (GHL). N6-(pyridoxal phosphate)lysine is present on Lys-224. (6S)-5,6,7,8-tetrahydrofolate is bound by residues Glu-240 and 348 to 350 (SPF).

This sequence belongs to the SHMT family. In terms of assembly, homodimer. The cofactor is pyridoxal 5'-phosphate.

It is found in the cytoplasm. It catalyses the reaction (6R)-5,10-methylene-5,6,7,8-tetrahydrofolate + glycine + H2O = (6S)-5,6,7,8-tetrahydrofolate + L-serine. It functions in the pathway one-carbon metabolism; tetrahydrofolate interconversion. The protein operates within amino-acid biosynthesis; glycine biosynthesis; glycine from L-serine: step 1/1. Its function is as follows. Catalyzes the reversible interconversion of serine and glycine with tetrahydrofolate (THF) serving as the one-carbon carrier. This reaction serves as the major source of one-carbon groups required for the biosynthesis of purines, thymidylate, methionine, and other important biomolecules. Also exhibits THF-independent aldolase activity toward beta-hydroxyamino acids, producing glycine and aldehydes, via a retro-aldol mechanism. This chain is Serine hydroxymethyltransferase, found in Campylobacter jejuni (strain RM1221).